A 1835-amino-acid polypeptide reads, in one-letter code: Urea amidolyase (1835 aa).

Residues 122 to 129 (GAIIVGKT) and Lys747 contribute to the ATP site. In terms of domain architecture, Biotin carboxylation spans 632-1075 (LFDTVLIANR…STNILNSYQY (444 aa)). The region spanning 751–948 (RQIAQKAGVP…LVEWMIRIAA (198 aa)) is the ATP-grasp domain. The residue at position 803 (Ser803) is a Phosphoserine. Residues Glu830 and Asn865 each contribute to the ATP site. The Biotinyl-binding domain maps to 1754 to 1832 (DEEEDFPEGA…DSGDIVAVIE (79 aa)). The residue at position 1798 (Lys1798) is an N6-biotinyllysine.

As to quaternary structure, monomer. It depends on biotin as a cofactor.

The enzyme catalyses urea + hydrogencarbonate + ATP = urea-1-carboxylate + ADP + phosphate + H(+). The catalysed reaction is urea-1-carboxylate + H2O + 3 H(+) = 2 NH4(+) + 2 CO2. The protein operates within nitrogen metabolism; urea degradation; CO(2) and NH(3) from urea (allophanate route): step 1/2. It participates in nitrogen metabolism; urea degradation; CO(2) and NH(3) from urea (allophanate route): step 2/2. Its function is as follows. Hydrolysis of urea to ammonia and CO(2). The chain is Urea amidolyase (DUR1,2) from Saccharomyces cerevisiae (strain ATCC 204508 / S288c) (Baker's yeast).